Reading from the N-terminus, the 453-residue chain is uncharacterized protein (453 aa).

In terms of domain architecture, TRAM spans 5–63 (LLKKNQSIELTIEDLTHDGSGVGKIDGYPFFIPNTLPGEKVTAKIIKLNKNYGFARMEN). The [4Fe-4S] cluster site is built by C76, C82, C85, and C162. Residues Q285, Y314, E335, and D383 each contribute to the S-adenosyl-L-methionine site. C410 (nucleophile) is an active-site residue.

This sequence belongs to the class I-like SAM-binding methyltransferase superfamily. RNA M5U methyltransferase family.

This is an uncharacterized protein from Listeria monocytogenes serovar 1/2a (strain ATCC BAA-679 / EGD-e).